The primary structure comprises 93 residues: uncharacterized protein (93 aa).

The protein belongs to the BolA/IbaG family.

This is an uncharacterized protein from Sinorhizobium sp.